The following is an 816-amino-acid chain: Fibroblast growth factor receptor (816 aa).

The N-terminal stretch at 1 to 19 (MISDWCVVLVLLMSRLVFG) is a signal peptide. The Extracellular portion of the chain corresponds to 20 to 370 (LNFTEPVNYI…YKEESVEKTV (351 aa)). Residues asparagine 21, asparagine 69, asparagine 119, asparagine 156, asparagine 171, asparagine 244, asparagine 274, asparagine 313, and asparagine 321 are each glycosylated (N-linked (GlcNAc...) asparagine). The Ig-like C2-type 1 domain maps to 25-105 (PVNYILKLGE…VTAMNEESVQ (81 aa)). A disulfide bond links cysteine 43 and cysteine 94. Residues 126-217 (LRIKNDISLL…GKIEHIMTVE (92 aa)) enclose the Ig-like C2-type 2 domain. Cysteine 147 and cysteine 201 are oxidised to a cystine. Residues 371 to 391 (IFIVITSMLAGLIFVAFVIFF) traverse the membrane as a helical segment. The Cytoplasmic portion of the chain corresponds to 392–816 (ICRVRSKDKF…DILLSHYAVS (425 aa)). In terms of domain architecture, Protein kinase spans 474–747 (LETDCLLGEG…QLIEDLERML (274 aa)). Residues 480–488 (LGEGAFGRV) and lysine 508 contribute to the ATP site. Aspartate 612 functions as the Proton acceptor in the catalytic mechanism. Tyrosine 643 is modified (phosphotyrosine; by autocatalysis).

It belongs to the protein kinase superfamily. Tyr protein kinase family. Fibroblast growth factor receptor subfamily.

It is found in the membrane. The catalysed reaction is L-tyrosyl-[protein] + ATP = O-phospho-L-tyrosyl-[protein] + ADP + H(+). Functionally, receptor for basic fibroblast growth factor. The chain is Fibroblast growth factor receptor (FGFR) from Hydra vulgaris (Hydra).